We begin with the raw amino-acid sequence, 88 residues long: UPF0250 protein swp_3927 (88 aa).

This sequence belongs to the UPF0250 family.

The polypeptide is UPF0250 protein swp_3927 (Shewanella piezotolerans (strain WP3 / JCM 13877)).